A 126-amino-acid chain; its full sequence is Profilin-3 (126 aa).

It belongs to the profilin family. In terms of assembly, occurs in many kinds of cells as a complex with monomeric actin in a 1:1 ratio.

The protein localises to the cytoplasm. Its subcellular location is the cytoskeleton. Functionally, binds to actin and affects the structure of the cytoskeleton. At high concentrations, profilin prevents the polymerization of actin, whereas it enhances it at low concentrations. By binding to PIP2, it inhibits the formation of IP3 and DG. This chain is Profilin-3 (proC), found in Dictyostelium discoideum (Social amoeba).